We begin with the raw amino-acid sequence, 914 residues long: Polyribonucleotide nucleotidyltransferase (914 aa).

The interval 407-427 is disordered; it reads YMHNYEMPPYSTGETGRVGSP. Asp-521 and Asp-527 together coordinate Mg(2+). The KH domain maps to 587-646; the sequence is PRIITTSVPVEKIGEVIGPKGKMINQIQEDTGAEIAIEDDGTVFISSEGGEAAKKAKSII. The S1 motif domain maps to 658–730; the sequence is GETYNGKVVK…DRGKISLAIP (73 aa). The segment at 727–914 is disordered; it reads LAIPGFEDQE…VRRDFDPFED (188 aa). Basic and acidic residues-rich tracts occupy residues 742 to 789, 797 to 865, and 873 to 899; these read SRGD…RRSD, DRPR…DRRG, and RGSD…ERTE.

It belongs to the polyribonucleotide nucleotidyltransferase family. Requires Mg(2+) as cofactor.

The protein localises to the cytoplasm. It carries out the reaction RNA(n+1) + phosphate = RNA(n) + a ribonucleoside 5'-diphosphate. Functionally, involved in mRNA degradation. Catalyzes the phosphorolysis of single-stranded polyribonucleotides processively in the 3'- to 5'-direction. The polypeptide is Polyribonucleotide nucleotidyltransferase (Bifidobacterium longum subsp. infantis (strain ATCC 15697 / DSM 20088 / JCM 1222 / NCTC 11817 / S12)).